A 184-amino-acid chain; its full sequence is UPF0397 protein SAR2767 (184 aa).

A run of 5 helical transmembrane segments spans residues 11–31, 44–64, 77–97, 117–137, and 148–168; these read VVAI…VVIP, AFLA…TGLI, AWWS…WIGL, GQII…DILI, and QGVI…TILL.

The protein belongs to the UPF0397 family.

The protein resides in the cell membrane. The sequence is that of UPF0397 protein SAR2767 from Staphylococcus aureus (strain MRSA252).